The primary structure comprises 154 residues: Avirulence protein ATR13 (154 aa).

A signal peptide spans 1 to 19 (MRLVHAVLLPGIIVFVSNG). The short motif at 38–41 (RQLR) is the RxLR element. The leucine heptad repeat region stretch occupies residues 50–92 (LSRASFGLGKAQDPLDKFFSKIIFSGKPIETSYSAKGIHEKII). The tract at residues 93–103 (EAHDLHVSKSK) is single repeat region. A highly variable C-terminus domain region spans residues 104–154 (NAPIQYASVMEYLKKTYPGPDIERIVSTLERHDEVGAKDLGAKLRDALDRQ).

Belongs to the RxLR effector family.

It is found in the secreted. The protein resides in the host cytoplasm. Functionally, secreted effector that acts as an elicitor of hypersensitive response (HR) specifically on plants carrying defense protein RPP13. Recognition of ATR13 by RPP13 initiates defense responses that are effective against oomycete, bacterial and viral pathogens. The allele ATR13-Emco5 recognizes RPP13-Nd, the RPP13 defense protein from Arabidopsis thaliana ecotype Niederzenz. The protein is Avirulence protein ATR13 of Hyaloperonospora arabidopsidis (Peronospora arabidopsidis).